We begin with the raw amino-acid sequence, 346 residues long: Phenylalanine--tRNA ligase alpha subunit (346 aa).

A Mg(2+)-binding site is contributed by Glu-258.

The protein belongs to the class-II aminoacyl-tRNA synthetase family. Phe-tRNA synthetase alpha subunit type 1 subfamily. Tetramer of two alpha and two beta subunits. It depends on Mg(2+) as a cofactor.

The protein resides in the cytoplasm. It catalyses the reaction tRNA(Phe) + L-phenylalanine + ATP = L-phenylalanyl-tRNA(Phe) + AMP + diphosphate + H(+). In Protochlamydia amoebophila (strain UWE25), this protein is Phenylalanine--tRNA ligase alpha subunit.